A 212-amino-acid chain; its full sequence is External core antigen (212 aa).

A signal peptide spans 1 to 19; the sequence is MQLFHLCLIISCSCPTVQA. The HBEAG stretch occupies residues 25-27; it reads GWL. The segment at 165-212 is disordered; that stretch reads NAPILSTLPETTVVRRRGRSPRRRTPSPRRRRSQSPRRRRSQSRESQC. A compositionally biased stretch (basic residues) spans 178–205; sequence VRRRGRSPRRRTPSPRRRRSQSPRRRRS. The stretch at 184-190 is one 1; half-length repeat; sequence SPRRRTP. The segment at 184–206 is 3 X 8 AA repeats of S-P-R-R-R-R-S-Q; it reads SPRRRTPSPRRRRSQSPRRRRSQ. A propeptide spanning residues 184–212 is cleaved from the precursor; that stretch reads SPRRRTPSPRRRRSQSPRRRRSQSRESQC. Tandem repeats lie at residues 191–198 and 199–206.

It belongs to the orthohepadnavirus precore antigen family. As to quaternary structure, homodimerizes. Post-translationally, phosphorylated. Cleaved by host furin.

It is found in the secreted. The protein localises to the host nucleus. In terms of biological role, may regulate immune response to the intracellular capsid in acting as a T-cell tolerogen, by having an immunoregulatory effect which prevents destruction of infected cells by cytotoxic T-cells. This immune regulation may predispose to chronicity during perinatal infections and prevent severe liver injury during adult infections. This chain is External core antigen, found in Homo sapiens (Human).